The chain runs to 570 residues: Sulfite reductase [NADPH] hemoprotein beta-component (570 aa).

4 residues coordinate [4Fe-4S] cluster: Cys434, Cys440, Cys479, and Cys483. Cys483 lines the siroheme pocket.

It belongs to the nitrite and sulfite reductase 4Fe-4S domain family. Alpha(8)-beta(8). The alpha component is a flavoprotein, the beta component is a hemoprotein. Siroheme serves as cofactor. [4Fe-4S] cluster is required as a cofactor.

The catalysed reaction is hydrogen sulfide + 3 NADP(+) + 3 H2O = sulfite + 3 NADPH + 4 H(+). It participates in sulfur metabolism; hydrogen sulfide biosynthesis; hydrogen sulfide from sulfite (NADPH route): step 1/1. In terms of biological role, component of the sulfite reductase complex that catalyzes the 6-electron reduction of sulfite to sulfide. This is one of several activities required for the biosynthesis of L-cysteine from sulfate. This chain is Sulfite reductase [NADPH] hemoprotein beta-component, found in Salmonella schwarzengrund (strain CVM19633).